The primary structure comprises 184 residues: Regulatory protein RecX (184 aa).

A disordered region spans residues 1-21; sequence MTLFPLPSTSDPAEADESTKR.

This sequence belongs to the RecX family.

The protein localises to the cytoplasm. Modulates RecA activity. The polypeptide is Regulatory protein RecX (Mycolicibacterium vanbaalenii (strain DSM 7251 / JCM 13017 / BCRC 16820 / KCTC 9966 / NRRL B-24157 / PYR-1) (Mycobacterium vanbaalenii)).